Consider the following 678-residue polypeptide: Endopolyphosphatase (678 aa).

Residues 1–2 (MR) are Cytoplasmic-facing. Residues 3-23 (SPLLASLFALALSIASSEAAI) traverse the membrane as a helical; Signal-anchor for type II membrane protein segment. Residues 24 to 678 (SSTEQVPLSG…ELMLVSTETD (655 aa)) lie on the Vacuolar side of the membrane. The disordered stretch occupies residues 70–109 (YKTGSTFDSGCHRKPKKDGKSEGKKATENERGNEDLDDKE). Residues 87-103 (DGKSEGKKATENERGNE) are compositionally biased toward basic and acidic residues. Residues Asn138, Asn369, and Asn447 are each glycosylated (N-linked (GlcNAc...) asparagine). The tract at residues 504–547 (KGSGGHRHDVPKGDCSLPSNEDKPHCTFKRKPRHYSKRSPSRTN) is disordered. Basic residues predominate over residues 529 to 543 (CTFKRKPRHYSKRSP). Asn591 and Asn616 each carry an N-linked (GlcNAc...) asparagine glycan.

The protein belongs to the endopolyphosphatase PPN1 family. A divalent metal cation serves as cofactor. Post-translationally, processing by proteases in the vacuole may be required for activation.

Its subcellular location is the vacuole membrane. It catalyses the reaction [phosphate](n+1) + n H2O = (n+1) phosphate + n H(+). Functionally, catalyzes the hydrolysis of inorganic polyphosphate (polyP) chains of many hundreds of phosphate residues into shorter lengths. In Cryptococcus neoformans var. neoformans serotype D (strain JEC21 / ATCC MYA-565) (Filobasidiella neoformans), this protein is Endopolyphosphatase (PPN1).